Consider the following 611-residue polypeptide: MTKVAVEKEEPGVVYKVAGSLVIAENMSGTRMYELAKVGWNKLVGEIIRLEGNYAYIQVYEDTSGLSVGDPVIKTGNALSVELGPGILDNIYDGIQRPLERIANVCGDVYIYKGIDMTSLDHDKQWQFYADKKLKLNDIVTGGDIFGFVDENKLFKEHKIMAPPNAKGRLTYIAPDGSYTLKDKIFELEYQGKKYTYGLSHLWPVRDPRPVLEKVTGDTLLLTGQRVLDSLFPTVQGGTCAIPGAFGCGKTCVSQALSKYSNSEVIIYVGCGERGNEMAEILSDFPELTTKVDNEDVGIMQRTCLVANTSNMPVAAREASIYTGITLCEYFRDMGYNATMMADSTSRWAEALREISGRLAEMPADSGYPAYLGARLASFYERAGKVKCIGSPSRIGSITIVGAVSPPGGDFSDPVTTATMSIVQAFWGLDKKLAQRKHFPSVNWSTSFSKYVRQLEQYFDNFDQDFLSLRQKISDILQQESDLNDIVQLVGKDSLSEDQKVVMEVAKIIREDFLQQNAFSDYDYMCPLQKTVGMMRIICHFYAQCLRTLQEYDSRERKIGWGSIYNTLRPTINKITHMKFENPKNSDEYFKKYFKALEEEITVGLRNLMEK.

Position 244-251 (244-251 (GAFGCGKT)) interacts with ATP.

Belongs to the ATPase alpha/beta chains family. As to quaternary structure, V-ATPase is a heteromultimeric enzyme made up of two complexes: the ATP-hydrolytic V1 complex and the proton translocation V0 complex. The V1 complex consists of three catalytic AB heterodimers that form a heterohexamer, three peripheral stalks each consisting of EG heterodimers, one central rotor including subunits D and F, and the regulatory subunits C and H. The proton translocation complex V0 consists of the proton transport subunit a, a ring of proteolipid subunits c9c'', rotary subunit d and subunit e.

The protein localises to the cell membrane. The protein resides in the vacuole. It is found in the vesicle. The catalysed reaction is ATP + H2O + 4 H(+)(in) = ADP + phosphate + 5 H(+)(out). Its activity is regulated as follows. ATP hydrolysis occurs at the interface between the nucleotide-binding domains of subunits A and B. ATP hydrolysis triggers a conformational change in the subunits D and F, which induces a shift of subunit d. The c-ring is subsequently rotated and results in a continuous proton translocation across the membrane. Its function is as follows. Catalytic subunit of the V1 complex of vacuolar(H+)-ATPase (V-ATPase), a multisubunit enzyme composed of a peripheral complex (V1) that hydrolyzes ATP and a membrane integral complex (V0) that translocates protons. V-ATPase is responsible for acidifying and maintaining the pH of intracellular compartments and in some cell types, is targeted to the plasma membrane, where it is responsible for acidifying the extracellular environment. During the trophozoite stage, involved in the acidification of the extracellular space next to the cell membrane. In Plasmodium falciparum (isolate 3D7), this protein is V-type proton ATPase catalytic subunit A.